The primary structure comprises 351 residues: V-type proton ATPase subunit d2 (351 aa).

This sequence belongs to the V-ATPase V0D/AC39 subunit family. V-ATPase is a heteromultimeric enzyme composed of a peripheral catalytic V1 complex (components A to H) attached to an integral membrane V0 proton pore complex (components: a, c, c'', d and e).

Its subcellular location is the vacuole membrane. Subunit of the integral membrane V0 complex of vacuolar ATPase. Vacuolar ATPase is responsible for acidifying a variety of intracellular compartments in eukaryotic cells, thus providing most of the energy required for transport processes in the vacuolar system. This is V-type proton ATPase subunit d2 (VHA-d2) from Arabidopsis thaliana (Mouse-ear cress).